The following is a 178-amino-acid chain: MPTSSATPAILPIAAVSQLAFRDAMSGLAAAVNLITTDGPGGRAGFTATAVCSVTDQPPTLLVCINRSASVYDAFIENGTLCVNTLGNGQQDLSNLFGGKSSQQERFAGGQWEAGVTGAPVLDSAKLALDCKVSQSVSVGTHDILFCEVVDIRHQSGADALVYFGRRYHHLPSETPAA.

This sequence belongs to the non-flavoprotein flavin reductase family. RutF subfamily.

The enzyme catalyses FMNH2 + NAD(+) = FMN + NADH + 2 H(+). Catalyzes the reduction of FMN to FMNH2 which is used to reduce pyrimidine by RutA via the Rut pathway. This chain is FMN reductase (NADH) RutF, found in Pseudomonas syringae pv. syringae (strain B728a).